Consider the following 132-residue polypeptide: Small ribosomal subunit protein uS8 (132 aa).

Belongs to the universal ribosomal protein uS8 family. In terms of assembly, part of the 30S ribosomal subunit. Contacts proteins S5 and S12.

Its function is as follows. One of the primary rRNA binding proteins, it binds directly to 16S rRNA central domain where it helps coordinate assembly of the platform of the 30S subunit. This chain is Small ribosomal subunit protein uS8, found in Psychrobacter cryohalolentis (strain ATCC BAA-1226 / DSM 17306 / VKM B-2378 / K5).